The chain runs to 268 residues: Tetraspanin-33 (268 aa).

The Cytoplasmic portion of the chain corresponds to 1-23 (MVRKSPGSGKEEDFTFISPVVKY). Residues 24-44 (LLIFFNMLFWVISMVMVGIGV) form a helical membrane-spanning segment. At 45–63 (YARLLKHAEAAMACLAVDP) the chain is on the extracellular side. Residues 64–84 (ALLLIGVGILMFLITFCGCIG) form a helical membrane-spanning segment. At 85–95 (SLRENICLLQT) the chain is on the cytoplasmic side. Residues 96–116 (FSICLTLVFLLQLAVGIVGFI) traverse the membrane as a helical segment. Over 117–226 (FSDKARGKVS…FIHTNGCIDR (110 aa)) the chain is Extracellular. Intrachain disulfides connect Cys155/Cys223, Cys156/Cys188, Cys172/Cys182, and Cys189/Cys202. Asn171 and Asn176 each carry an N-linked (GlcNAc...) asparagine glycan. The chain crosses the membrane as a helical span at residues 227–247 (LVNWIHSNLFLLGGVALGLAI). The Cytoplasmic portion of the chain corresponds to 248–268 (PQVTKHLRAKLIYTWRIGIQV).

It belongs to the tetraspanin (TM4SF) family. In terms of assembly, homodimer; disulfide-linked.

The protein resides in the cell membrane. Its subcellular location is the cell junction. It is found in the adherens junction. The protein localises to the cytoplasm. In terms of biological role, part of TspanC8 subgroup, composed of 6 members that interact with the transmembrane metalloprotease ADAM10. This interaction is required for ADAM10 exit from the endoplasmic reticulum and for enzymatic maturation and trafficking to the cell surface as well as substrate specificity. Different TspanC8/ADAM10 complexes have distinct substrates. The sequence is that of Tetraspanin-33 (tspan33) from Xenopus laevis (African clawed frog).